The primary structure comprises 365 residues: Peptide chain release factor 2 (365 aa).

At Gln-251 the chain carries N5-methylglutamine.

This sequence belongs to the prokaryotic/mitochondrial release factor family. Post-translationally, methylated by PrmC. Methylation increases the termination efficiency of RF2.

The protein resides in the cytoplasm. Its function is as follows. Peptide chain release factor 2 directs the termination of translation in response to the peptide chain termination codons UGA and UAA. This chain is Peptide chain release factor 2, found in Campylobacter jejuni (strain RM1221).